The following is a 291-amino-acid chain: Nucleotide-binding protein lmo2474 (291 aa).

13-20 (GMSGAGKT) is a binding site for ATP. 63–66 (DLRG) is a GTP binding site.

The protein belongs to the RapZ-like family.

Displays ATPase and GTPase activities. This Listeria monocytogenes serovar 1/2a (strain ATCC BAA-679 / EGD-e) protein is Nucleotide-binding protein lmo2474.